The primary structure comprises 242 residues: Transcription factor Spi-C (242 aa).

Positions 112–195 form a DNA-binding region, ETS; it reads LRLFEYLFES…IRRKLTYQFS (84 aa).

It belongs to the ETS family. As to quaternary structure, binds DNA as a monomer. Expressed in lymphoid tissues, including spleen, bone marrow and thymus. According to PubMed:19037245, highly expressed in red pulp macrophages and, at lower, levels in B-cells, but not in other cells, including, monocytes, dendritic cells and other tissue macrophages. According to PubMed:10464163 expressed in pre- and mature B-cells but not in immature B-cells; according to PubMed:10187812 not expressed in pre- but predominantly in mature B-cells and at lower levels in macrophages.

The protein resides in the nucleus. Functionally, controls the development of red pulp macrophages required for red blood cells recycling and iron homeostasis. Transcription factor that binds to the PU-box, a purine-rich DNA sequence (5'-GAGGA[AT]-3') that can act as a lymphoid-specific enhancer. Regulates VCAM1 gene expression. This Mus musculus (Mouse) protein is Transcription factor Spi-C (Spic).